We begin with the raw amino-acid sequence, 86 residues long: Elongation factor 1-beta (86 aa).

It belongs to the EF-1-beta/EF-1-delta family.

Promotes the exchange of GDP for GTP in EF-1-alpha/GDP, thus allowing the regeneration of EF-1-alpha/GTP that could then be used to form the ternary complex EF-1-alpha/GTP/AAtRNA. This Methanocorpusculum labreanum (strain ATCC 43576 / DSM 4855 / Z) protein is Elongation factor 1-beta.